The following is a 359-amino-acid chain: Nicotinate-nucleotide--dimethylbenzimidazole phosphoribosyltransferase (359 aa).

The active-site Proton acceptor is Glu-318.

This sequence belongs to the CobT family. Homodimer.

It carries out the reaction 5,6-dimethylbenzimidazole + nicotinate beta-D-ribonucleotide = alpha-ribazole 5'-phosphate + nicotinate + H(+). It participates in nucleoside biosynthesis; alpha-ribazole biosynthesis; alpha-ribazole from 5,6-dimethylbenzimidazole: step 1/2. In terms of biological role, catalyzes the synthesis of alpha-ribazole-5'-phosphate from nicotinate mononucleotide (NAMN) and 5,6-dimethylbenzimidazole (DMB). This Escherichia coli O127:H6 (strain E2348/69 / EPEC) protein is Nicotinate-nucleotide--dimethylbenzimidazole phosphoribosyltransferase.